The following is a 355-amino-acid chain: tRNA uridine(34) hydroxylase (355 aa).

Positions Asp146 to Leu240 constitute a Rhodanese domain. Cys200 functions as the Cysteine persulfide intermediate in the catalytic mechanism.

The protein belongs to the TrhO family.

The enzyme catalyses uridine(34) in tRNA + AH2 + O2 = 5-hydroxyuridine(34) in tRNA + A + H2O. Catalyzes oxygen-dependent 5-hydroxyuridine (ho5U) modification at position 34 in tRNAs. This Pectobacterium atrosepticum (strain SCRI 1043 / ATCC BAA-672) (Erwinia carotovora subsp. atroseptica) protein is tRNA uridine(34) hydroxylase.